The sequence spans 242 residues: N-acetylmuramate alpha-1-phosphate uridylyltransferase (242 aa).

Residues 16–18 (GTR) and Lys28 contribute to the UTP site. Asn113 provides a ligand contact to substrate. Mg(2+) is bound at residue Asp115. A substrate-binding site is contributed by Asp158.

It belongs to the nucleotidyltransferase MurU family. Monomer. It depends on Mg(2+) as a cofactor.

The enzyme catalyses N-acetyl-alpha-D-muramate 1-phosphate + UDP + H(+) = UDP-N-acetyl-alpha-D-muramate + phosphate. The protein operates within cell wall biogenesis; peptidoglycan recycling. Its function is as follows. Catalyzes the formation of UDP-N-acetylmuramate (UDP-MurNAc), a crucial precursor of the bacterial peptidoglycan cell wall, from UTP and MurNAc-alpha-1P. Is likely involved in peptidoglycan recycling as part of a cell wall recycling pathway that bypasses de novo biosynthesis of the peptidoglycan precursor UDP-MurNAc. Is able to complement the fosfomycin sensitivity phenotype of a P.putida mutant lacking murU. The polypeptide is N-acetylmuramate alpha-1-phosphate uridylyltransferase (Caulobacter vibrioides (strain ATCC 19089 / CIP 103742 / CB 15) (Caulobacter crescentus)).